The chain runs to 153 residues: Small ribosomal subunit protein bS6 (153 aa).

The interval Glu-97–Glu-153 is disordered. Residues Arg-105–Glu-147 are compositionally biased toward basic and acidic residues.

Belongs to the bacterial ribosomal protein bS6 family.

Binds together with bS18 to 16S ribosomal RNA. The protein is Small ribosomal subunit protein bS6 of Bradyrhizobium sp. (strain BTAi1 / ATCC BAA-1182).